We begin with the raw amino-acid sequence, 72 residues long: uncharacterized protein (72 aa).

Residues 33 to 53 (VCIFFSLIFFFFFFFFCVNWG) form a helical membrane-spanning segment.

It localises to the membrane. This is an uncharacterized protein from Dictyostelium discoideum (Social amoeba).